We begin with the raw amino-acid sequence, 277 residues long: Thiamine thiazole synthase (277 aa).

Residues Ser-36, Gly-63, Val-126, and 152–154 (HVD) each bind NAD(+). Residues Asp-154 and His-169 each coordinate Fe cation. Position 230 (Met-230) interacts with NAD(+). Arg-240 serves as a coordination point for glycine.

This sequence belongs to the THI4 family. In terms of assembly, homooctamer; tetramer of dimers. Fe(2+) serves as cofactor.

It carries out the reaction hydrogen sulfide + glycine + NAD(+) = ADP-5-ethyl-4-methylthiazole-2-carboxylate + nicotinamide + 3 H2O + H(+). It participates in cofactor biosynthesis; thiamine diphosphate biosynthesis. Functionally, involved in the biosynthesis of the thiazole moiety of thiamine. Catalyzes the conversion of NAD and glycine to adenosine diphosphate 5-(2-hydroxyethyl)-4-methylthiazole-2-carboxylate (ADT), an adenylated thiazole intermediate, using free sulfide as a source of sulfur. This chain is Thiamine thiazole synthase, found in Fervidobacterium nodosum (strain ATCC 35602 / DSM 5306 / Rt17-B1).